The primary structure comprises 354 residues: DNA polymerase IV (354 aa).

The UmuC domain maps to 14–198 (IIHIDMDAFF…MDIAKFHGVG (185 aa)). Residues D18 and D116 each contribute to the Mg(2+) site. Residue E117 is part of the active site.

The protein belongs to the DNA polymerase type-Y family. As to quaternary structure, monomer. Requires Mg(2+) as cofactor.

It is found in the cytoplasm. It catalyses the reaction DNA(n) + a 2'-deoxyribonucleoside 5'-triphosphate = DNA(n+1) + diphosphate. Its function is as follows. Poorly processive, error-prone DNA polymerase involved in untargeted mutagenesis. Copies undamaged DNA at stalled replication forks, which arise in vivo from mismatched or misaligned primer ends. These misaligned primers can be extended by PolIV. Exhibits no 3'-5' exonuclease (proofreading) activity. May be involved in translesional synthesis, in conjunction with the beta clamp from PolIII. In Streptococcus sanguinis (strain SK36), this protein is DNA polymerase IV.